Reading from the N-terminus, the 361-residue chain is UDP-N-acetylglucosamine--N-acetylmuramyl-(pentapeptide) pyrophosphoryl-undecaprenol N-acetylglucosamine transferase (361 aa).

UDP-N-acetyl-alpha-D-glucosamine contacts are provided by residues 12 to 14 (TGG), asparagine 123, arginine 166, serine 192, and glutamine 293.

Belongs to the glycosyltransferase 28 family. MurG subfamily.

The protein localises to the cell inner membrane. It carries out the reaction di-trans,octa-cis-undecaprenyl diphospho-N-acetyl-alpha-D-muramoyl-L-alanyl-D-glutamyl-meso-2,6-diaminopimeloyl-D-alanyl-D-alanine + UDP-N-acetyl-alpha-D-glucosamine = di-trans,octa-cis-undecaprenyl diphospho-[N-acetyl-alpha-D-glucosaminyl-(1-&gt;4)]-N-acetyl-alpha-D-muramoyl-L-alanyl-D-glutamyl-meso-2,6-diaminopimeloyl-D-alanyl-D-alanine + UDP + H(+). The protein operates within cell wall biogenesis; peptidoglycan biosynthesis. Cell wall formation. Catalyzes the transfer of a GlcNAc subunit on undecaprenyl-pyrophosphoryl-MurNAc-pentapeptide (lipid intermediate I) to form undecaprenyl-pyrophosphoryl-MurNAc-(pentapeptide)GlcNAc (lipid intermediate II). In Caulobacter vibrioides (strain ATCC 19089 / CIP 103742 / CB 15) (Caulobacter crescentus), this protein is UDP-N-acetylglucosamine--N-acetylmuramyl-(pentapeptide) pyrophosphoryl-undecaprenol N-acetylglucosamine transferase.